The sequence spans 258 residues: Phosphate import ATP-binding protein PstB (258 aa).

Residues 13 to 253 enclose the ABC transporter domain; that stretch reads ITVENLNLWY…PREKSTEDYI (241 aa). 45 to 52 contributes to the ATP binding site; sequence GPSGCGKS.

The protein belongs to the ABC transporter superfamily. Phosphate importer (TC 3.A.1.7) family. As to quaternary structure, the complex is composed of two ATP-binding proteins (PstB), two transmembrane proteins (PstC and PstA) and a solute-binding protein (PstS).

It is found in the cell membrane. It carries out the reaction phosphate(out) + ATP + H2O = ADP + 2 phosphate(in) + H(+). Its function is as follows. Part of the ABC transporter complex PstSACB involved in phosphate import. Responsible for energy coupling to the transport system. This is Phosphate import ATP-binding protein PstB from Methanosarcina mazei (strain ATCC BAA-159 / DSM 3647 / Goe1 / Go1 / JCM 11833 / OCM 88) (Methanosarcina frisia).